Here is a 425-residue protein sequence, read N- to C-terminus: Enolase (425 aa).

Gln-162 serves as a coordination point for (2R)-2-phosphoglycerate. The active-site Proton donor is Glu-204. Mg(2+)-binding residues include Asp-241, Glu-282, and Asp-309. (2R)-2-phosphoglycerate is bound by residues Lys-334, Arg-363, Ser-364, and Lys-385. Catalysis depends on Lys-334, which acts as the Proton acceptor.

The protein belongs to the enolase family. It depends on Mg(2+) as a cofactor.

It localises to the cytoplasm. It is found in the secreted. Its subcellular location is the cell surface. The catalysed reaction is (2R)-2-phosphoglycerate = phosphoenolpyruvate + H2O. It participates in carbohydrate degradation; glycolysis; pyruvate from D-glyceraldehyde 3-phosphate: step 4/5. Catalyzes the reversible conversion of 2-phosphoglycerate (2-PG) into phosphoenolpyruvate (PEP). It is essential for the degradation of carbohydrates via glycolysis. This is Enolase from Corynebacterium glutamicum (strain R).